A 436-amino-acid polypeptide reads, in one-letter code: Cysteine--tRNA ligase (436 aa).

Cysteine 24 contributes to the Zn(2+) binding site. Positions 26-36 match the 'HIGH' region motif; the sequence is PTVYNHIHIGN. Cysteine 202, histidine 227, and glutamate 231 together coordinate Zn(2+). Positions 259 to 263 match the 'KMSKS' region motif; that stretch reads KMSKS. Lysine 262 contacts ATP.

It belongs to the class-I aminoacyl-tRNA synthetase family. As to quaternary structure, monomer. Zn(2+) is required as a cofactor.

It is found in the cytoplasm. The catalysed reaction is tRNA(Cys) + L-cysteine + ATP = L-cysteinyl-tRNA(Cys) + AMP + diphosphate. This Ureaplasma parvum serovar 3 (strain ATCC 700970) protein is Cysteine--tRNA ligase.